Consider the following 244-residue polypeptide: Large ribosomal subunit protein uL30 (244 aa).

The segment at 1–37 (MAPTKKVPQVPETVLKRRKQRADARTKAAQHKVTVAA) is disordered.

Belongs to the universal ribosomal protein uL30 family.

Functionally, binds to G-rich structures in 28S rRNA and in mRNAs. Plays a regulatory role in the translation apparatus; inhibits cell-free translation of mRNAs. This chain is Large ribosomal subunit protein uL30 (rpl-7), found in Caenorhabditis elegans.